An 80-amino-acid chain; its full sequence is Tripartite terminase subunit 2 (80 aa).

The protein belongs to the herpesviridae TRM2 protein family. Associates with TRM1 and TRM3 to form the tripartite terminase complex.

Its subcellular location is the host nucleus. Its function is as follows. Component of the molecular motor that translocates viral genomic DNA in empty capsid during DNA packaging. Forms a tripartite terminase complex together with TRM1 and TRM3 in the host cytoplasm. Once the complex reaches the host nucleus, it interacts with the capsid portal vertex. This portal forms a ring in which genomic DNA is translocated into the capsid. The protein is Tripartite terminase subunit 2 of Homo sapiens (Human).